We begin with the raw amino-acid sequence, 664 residues long: Tripartite terminase subunit 1 (664 aa).

The segment at 205 to 233 adopts a C3H1-type zinc-finger fold; sequence CHVCFEELCVTANQGATASRRLAGKICDH. Disordered stretches follow at residues 273–295 and 440–466; these read SKMT…AQER and HAAE…GGPE. Residues 281 to 292 are compositionally biased toward low complexity; that stretch reads GGPAEAPGPAAA.

It belongs to the herpesviridae TRM1 protein family. Associates with TRM2 and TRM3 to form the tripartite terminase complex. Interacts with portal protein.

The protein resides in the host nucleus. Functionally, component of the molecular motor that translocates viral genomic DNA in empty capsid during DNA packaging. Forms a tripartite terminase complex together with TRM2 and TRM3 in the host cytoplasm. Once the complex reaches the host nucleus, it interacts with the capsid portal vertex. This portal forms a ring in which genomic DNA is translocated into the capsid. TRM1 carries an endonuclease activity that plays an important role for the cleavage of concatemeric viral DNA into unit length genomes. This chain is Tripartite terminase subunit 1, found in Bos taurus (Bovine).